Consider the following 409-residue polypeptide: F-box protein At3g17320 (409 aa).

Residues 1-47 enclose the F-box domain; that stretch reads MTKISDLPRDLAEEVLSRVPVTYLRAIRFTCKKWNTLTKRRSFTKKL.

The polypeptide is F-box protein At3g17320 (Arabidopsis thaliana (Mouse-ear cress)).